Reading from the N-terminus, the 664-residue chain is MISKIVLKSFFKTRWMRHDLNNESQETDRFSEKQTLDVFKGTDHPDLEKGVAAIGNVLKTLPLRPGVYRMYDSKGNILYVGKARALRNRVANYTQISGLSRRIQRMVSQTRSMTIVTTVTESEALLLEAQLIKRYRPPYNILLRDDKSFPYILLKEDGTFPQFPSLQRHRGVKRAKGKYYGPFASADSVTLTLNSLQKLFLLRSCSDSFFRNRKRPCLLYQIKRCSAPCVGRISEDDYRDLAVDTRDFLAGKSTHVQKKLVTAMEQASNDLNYELAAVYRDRLKALAFIQSHQSINSGNLRNADIFGIECRAGLACIQVFFIRNRQNWGHHAYYLNHIDEQPLEDVMQSFLGQFYEDKIAPKDILTNYLPSDKNVLEDALSSQRDYRVKFYQPQRGELKKLVDQAVRNAKEAIDRRLAEASTQKQLLKEMVNLFHLDKIPDRIEVYDNSHIMGSNMVGGMIVAGPEGFRRNSYRKFNIKSPSINPGDDFEMMREVLTRRFSRLERSDPDHSSSEWPDLLLIDGGKGQVHAVKDILAEQGISDIAIVGISKGPDRNAGREHFHLVDGSEYALPPNSGLLFYLQRLRDEAHRFAIGTHRAKRAKNLTSSPLDEVPGIGPSRKKALLLHFGTARDVKNASLSELEKVNGISSAIARQIYDFFHHSPA.

Positions Leu63 to Ile141 constitute a GIY-YIG domain. One can recognise a UVR domain in the interval Thr254–Ile289.

The protein belongs to the UvrC family. In terms of assembly, interacts with UvrB in an incision complex.

It is found in the cytoplasm. Its function is as follows. The UvrABC repair system catalyzes the recognition and processing of DNA lesions. UvrC both incises the 5' and 3' sides of the lesion. The N-terminal half is responsible for the 3' incision and the C-terminal half is responsible for the 5' incision. In Zymomonas mobilis subsp. mobilis (strain ATCC 31821 / ZM4 / CP4), this protein is UvrABC system protein C.